Reading from the N-terminus, the 433-residue chain is Phosphoribosylamine--glycine ligase (433 aa).

One can recognise an ATP-grasp domain in the interval 111–317 (EFMARNNIKG…FVDICEAIVD (207 aa)). 138–194 (EDNPDVVVKPAGLTGGKGVKVMGEHMHTLEEAREYVKSVLEHDRVVIEERLKGEEVT) is a binding site for ATP. Residues Gln275, Glu287, and Asn289 each coordinate Mg(2+). Mn(2+)-binding residues include Gln275, Glu287, and Asn289.

Belongs to the GARS family. It depends on Mg(2+) as a cofactor. Mn(2+) serves as cofactor.

The enzyme catalyses 5-phospho-beta-D-ribosylamine + glycine + ATP = N(1)-(5-phospho-beta-D-ribosyl)glycinamide + ADP + phosphate + H(+). It functions in the pathway purine metabolism; IMP biosynthesis via de novo pathway; N(1)-(5-phospho-D-ribosyl)glycinamide from 5-phospho-alpha-D-ribose 1-diphosphate: step 2/2. The polypeptide is Phosphoribosylamine--glycine ligase (Methanocella arvoryzae (strain DSM 22066 / NBRC 105507 / MRE50)).